A 394-amino-acid polypeptide reads, in one-letter code: Elongation factor Tu (394 aa).

The 195-residue stretch at 10–204 (KPHVNVGTIG…AVDEWIPTPE (195 aa)) folds into the tr-type G domain. Residues 19 to 26 (GHIDHGKT) are G1. 19 to 26 (GHIDHGKT) lines the GTP pocket. T26 lines the Mg(2+) pocket. The tract at residues 60-64 (GITIN) is G2. The interval 81-84 (DCPG) is G3. GTP-binding positions include 81 to 85 (DCPGH) and 136 to 139 (NKCD). The interval 136-139 (NKCD) is G4. Positions 174–176 (SAL) are G5.

This sequence belongs to the TRAFAC class translation factor GTPase superfamily. Classic translation factor GTPase family. EF-Tu/EF-1A subfamily. As to quaternary structure, monomer.

It localises to the cytoplasm. The enzyme catalyses GTP + H2O = GDP + phosphate + H(+). In terms of biological role, GTP hydrolase that promotes the GTP-dependent binding of aminoacyl-tRNA to the A-site of ribosomes during protein biosynthesis. In Mycoplasma pneumoniae (strain ATCC 29342 / M129 / Subtype 1) (Mycoplasmoides pneumoniae), this protein is Elongation factor Tu.